A 544-amino-acid polypeptide reads, in one-letter code: Chaperonin GroEL 2 (544 aa).

Residues Thr29–Pro32, Asp86–Thr90, Gly413, Asn479–Ala481, and Asp495 each bind ATP.

This sequence belongs to the chaperonin (HSP60) family. As to quaternary structure, forms a cylinder of 14 subunits composed of two heptameric rings stacked back-to-back. Interacts with the co-chaperonin GroES.

Its subcellular location is the cytoplasm. The enzyme catalyses ATP + H2O + a folded polypeptide = ADP + phosphate + an unfolded polypeptide.. Together with its co-chaperonin GroES, plays an essential role in assisting protein folding. The GroEL-GroES system forms a nano-cage that allows encapsulation of the non-native substrate proteins and provides a physical environment optimized to promote and accelerate protein folding. This Synechococcus sp. (strain WH7803) protein is Chaperonin GroEL 2.